Consider the following 460-residue polypeptide: ATP synthase subunit beta (460 aa).

Residue 150-157 (GGAGVGKT) coordinates ATP.

It belongs to the ATPase alpha/beta chains family. As to quaternary structure, F-type ATPases have 2 components, CF(1) - the catalytic core - and CF(0) - the membrane proton channel. CF(1) has five subunits: alpha(3), beta(3), gamma(1), delta(1), epsilon(1). CF(0) has three main subunits: a(1), b(2) and c(9-12). The alpha and beta chains form an alternating ring which encloses part of the gamma chain. CF(1) is attached to CF(0) by a central stalk formed by the gamma and epsilon chains, while a peripheral stalk is formed by the delta and b chains.

The protein localises to the cell inner membrane. It carries out the reaction ATP + H2O + 4 H(+)(in) = ADP + phosphate + 5 H(+)(out). In terms of biological role, produces ATP from ADP in the presence of a proton gradient across the membrane. The catalytic sites are hosted primarily by the beta subunits. The polypeptide is ATP synthase subunit beta (Edwardsiella ictaluri (strain 93-146)).